A 213-amino-acid polypeptide reads, in one-letter code: Cytidylate kinase (213 aa).

7–15 lines the ATP pocket; it reads GPAASGKGT.

Belongs to the cytidylate kinase family. Type 1 subfamily.

It localises to the cytoplasm. It catalyses the reaction CMP + ATP = CDP + ADP. The enzyme catalyses dCMP + ATP = dCDP + ADP. The polypeptide is Cytidylate kinase (Rhodospirillum rubrum (strain ATCC 11170 / ATH 1.1.1 / DSM 467 / LMG 4362 / NCIMB 8255 / S1)).